The sequence spans 215 residues: NADH-quinone oxidoreductase subunit C (215 aa).

This sequence belongs to the complex I 30 kDa subunit family. NDH-1 is composed of 14 different subunits. Subunits NuoB, C, D, E, F, and G constitute the peripheral sector of the complex.

The protein resides in the cell inner membrane. It carries out the reaction a quinone + NADH + 5 H(+)(in) = a quinol + NAD(+) + 4 H(+)(out). NDH-1 shuttles electrons from NADH, via FMN and iron-sulfur (Fe-S) centers, to quinones in the respiratory chain. The immediate electron acceptor for the enzyme in this species is believed to be ubiquinone. Couples the redox reaction to proton translocation (for every two electrons transferred, four hydrogen ions are translocated across the cytoplasmic membrane), and thus conserves the redox energy in a proton gradient. This Methylobacterium sp. (strain 4-46) protein is NADH-quinone oxidoreductase subunit C.